The following is a 559-amino-acid chain: NXPE family member 3 (559 aa).

An N-terminal signal peptide occupies residues 1–30; that stretch reads MWTNFFKLRLFCCLLAVLMVVVLVVNVTQV. N-linked (GlcNAc...) asparagine glycans are attached at residues N26, N237, and N346.

The protein belongs to the NXPE family.

It localises to the secreted. This chain is NXPE family member 3 (NXPE3), found in Pongo abelii (Sumatran orangutan).